Reading from the N-terminus, the 666-residue chain is Translation factor guf1, mitochondrial (666 aa).

The N-terminal 44 residues, 1–44 (MRGCLQLGRWLSAAPRCQAASLRPPTVFPSYRYNRSFSTTTIYY), are a transit peptide targeting the mitochondrion. Residues 68-248 (ERFRNFCIVA…TVVEKVPAPI (181 aa)) form the tr-type G domain. Residues 77-84 (AHVDHGKS), 141-145 (DTPGH), and 195-198 (NKVD) contribute to the GTP site.

The protein belongs to the TRAFAC class translation factor GTPase superfamily. Classic translation factor GTPase family. LepA subfamily.

The protein localises to the mitochondrion inner membrane. It carries out the reaction GTP + H2O = GDP + phosphate + H(+). In terms of biological role, promotes mitochondrial protein synthesis. May act as a fidelity factor of the translation reaction, by catalyzing a one-codon backward translocation of tRNAs on improperly translocated ribosomes. Binds to mitochondrial ribosomes in a GTP-dependent manner. In Penicillium rubens (strain ATCC 28089 / DSM 1075 / NRRL 1951 / Wisconsin 54-1255) (Penicillium chrysogenum), this protein is Translation factor guf1, mitochondrial (guf1).